A 543-amino-acid polypeptide reads, in one-letter code: Glutamyl-tRNA(Gln) amidotransferase subunit A, chloroplastic/mitochondrial (543 aa).

Catalysis depends on charge relay system residues lysine 121 and serine 196. The active-site Acyl-ester intermediate is the serine 220.

This sequence belongs to the amidase family. GatA subfamily. Subunit of the heterotrimeric GatCAB amidotransferase (AdT) complex, composed of A, B and C subunits.

It localises to the mitochondrion. It is found in the plastid. Its subcellular location is the chloroplast stroma. It carries out the reaction L-glutamyl-tRNA(Gln) + L-glutamine + ATP + H2O = L-glutaminyl-tRNA(Gln) + L-glutamate + ADP + phosphate + H(+). Functionally, allows the formation of correctly charged Gln-tRNA(Gln) through the transamidation of misacylated Glu-tRNA(Gln) in chloroplasts and mitochondria. The reaction takes place in the presence of glutamine and ATP through an activated gamma-phospho-Glu-tRNA(Gln). This is Glutamyl-tRNA(Gln) amidotransferase subunit A, chloroplastic/mitochondrial from Zea mays (Maize).